The sequence spans 77 residues: Envelope small membrane protein (77 aa).

Topologically, residues 1-15 (MFLRLIDDNGIVLNS) are virion surface. The chain crosses the membrane as a helical span at residues 16-36 (ILWLLVMIFFFVLAMTFIKLI). Topologically, residues 37-77 (QLCFTCHYFFSRTLYQPVYKIFLAYQDYMQIAPVPAEVLNV) are intravirion.

It belongs to the alphacoronaviruses E protein family. In terms of assembly, homopentamer. Interacts with membrane protein M in the budding compartment of the host cell, which is located between endoplasmic reticulum and the Golgi complex. Interacts with Nucleoprotein.

It is found in the host Golgi apparatus membrane. Functionally, plays a central role in virus morphogenesis and assembly. Acts as a viroporin and self-assembles in host membranes forming pentameric protein-lipid pores that allow ion transport. Also plays a role in the induction of apoptosis. This chain is Envelope small membrane protein, found in Homo sapiens (Human).